A 761-amino-acid polypeptide reads, in one-letter code: Xaa-Pro dipeptidyl-peptidase (761 aa).

Residues Ser347, Asp467, and His497 each act as charge relay system in the active site.

It belongs to the peptidase S15 family. As to quaternary structure, homodimer.

The protein resides in the cytoplasm. The catalysed reaction is Hydrolyzes Xaa-Pro-|- bonds to release unblocked, N-terminal dipeptides from substrates including Ala-Pro-|-p-nitroanilide and (sequentially) Tyr-Pro-|-Phe-Pro-|-Gly-Pro-|-Ile.. Its function is as follows. Removes N-terminal dipeptides sequentially from polypeptides having unsubstituted N-termini provided that the penultimate residue is proline. This chain is Xaa-Pro dipeptidyl-peptidase, found in Streptococcus agalactiae serotype V (strain ATCC BAA-611 / 2603 V/R).